The primary structure comprises 247 residues: Probable transcriptional regulatory protein PBPRA1113 (247 aa).

Belongs to the TACO1 family.

The protein localises to the cytoplasm. This chain is Probable transcriptional regulatory protein PBPRA1113, found in Photobacterium profundum (strain SS9).